The sequence spans 240 residues: Lysoplasmalogenase TMEM86A (240 aa).

Topologically, residues 1–21 (MVSPVTVVKSEGPKLVPFFKA) are cytoplasmic. Residues 22–42 (TCVYFVLWLPSSSPSWVSALI) form a helical membrane-spanning segment. K43 is a topological domain (extracellular). Residues 44-64 (CLPIFCLWLFLLAHGLGFLLT) form a helical membrane-spanning segment. Residues 65–70 (HPSATR) are Cytoplasmic-facing. The helical transmembrane segment at 71–91 (IFVGLVFSAIGDAFLIWQDQG) threads the bilayer. Position 92 (Y92) is a topological domain, extracellular. Residues 93-113 (FVHGMLMFAVTHMLYASAFGM) form a helical membrane-spanning segment. Over 114–115 (RP) the chain is Cytoplasmic. The helical transmembrane segment at 116–136 (LGLRTGLLMVILSGLCYAFLY) threads the bilayer. The Extracellular segment spans residues 137–138 (PN). The chain crosses the membrane as a helical span at residues 139–159 (LTGAFTYVVGVYVAIIGFMGW). Residues 160-174 (RAMAGLQLVGAAWRW) lie on the Cytoplasmic side of the membrane. Residues 175-195 (TELAAGTGALLFIVSDLTIAL) traverse the membrane as a helical segment. Topologically, residues 196–206 (DKFCFPVPYSR) are extracellular. The helical transmembrane segment at 207-227 (ALIMSTYYAAQMLIALSAVES) threads the bilayer. The Cytoplasmic portion of the chain corresponds to 228–240 (REPVEDYRLSKAK).

The protein belongs to the TMEM86 family.

It localises to the endoplasmic reticulum membrane. The catalysed reaction is a 1-O-(1Z-alkenyl)-sn-glycero-3-phosphocholine + H2O = a 2,3-saturated aldehyde + sn-glycerol 3-phosphocholine. The enzyme catalyses a 1-O-(1Z-alkenyl)-sn-glycero-3-phosphoethanolamine + H2O = a 2,3-saturated aldehyde + sn-glycero-3-phosphoethanolamine. Its function is as follows. Catalyzes the hydrolysis of the vinyl ether bond of choline or ethanolamine lysoplasmalogens, forming fatty aldehyde and glycerophosphocholine or glycerophosphoethanolamine, respectively and is specific for the sn-2-deacylated (lyso) form of plasmalogen. Plays an important role in lysoplasmalogen metabolism in the adipocyte tissue and macrophages. The polypeptide is Lysoplasmalogenase TMEM86A (TMEM86A) (Bos taurus (Bovine)).